Here is a 502-residue protein sequence, read N- to C-terminus: UDP-N-acetylmuramoylalanine--D-glutamate ligase (502 aa).

ATP is bound at residue G136–T142.

This sequence belongs to the MurCDEF family.

The protein localises to the cytoplasm. It carries out the reaction UDP-N-acetyl-alpha-D-muramoyl-L-alanine + D-glutamate + ATP = UDP-N-acetyl-alpha-D-muramoyl-L-alanyl-D-glutamate + ADP + phosphate + H(+). Its pathway is cell wall biogenesis; peptidoglycan biosynthesis. Its function is as follows. Cell wall formation. Catalyzes the addition of glutamate to the nucleotide precursor UDP-N-acetylmuramoyl-L-alanine (UMA). This Corynebacterium jeikeium (strain K411) protein is UDP-N-acetylmuramoylalanine--D-glutamate ligase.